The sequence spans 141 residues: Large ribosomal subunit protein uL11 (141 aa).

Belongs to the universal ribosomal protein uL11 family. As to quaternary structure, part of the ribosomal stalk of the 50S ribosomal subunit. Interacts with L10 and the large rRNA to form the base of the stalk. L10 forms an elongated spine to which L12 dimers bind in a sequential fashion forming a multimeric L10(L12)X complex. In terms of processing, one or more lysine residues are methylated.

Its function is as follows. Forms part of the ribosomal stalk which helps the ribosome interact with GTP-bound translation factors. This Chlorobaculum parvum (strain DSM 263 / NCIMB 8327) (Chlorobium vibrioforme subsp. thiosulfatophilum) protein is Large ribosomal subunit protein uL11.